The primary structure comprises 88 residues: UPF0297 protein SAK_2030 (88 aa).

It belongs to the UPF0297 family.

The sequence is that of UPF0297 protein SAK_2030 from Streptococcus agalactiae serotype Ia (strain ATCC 27591 / A909 / CDC SS700).